Consider the following 223-residue polypeptide: Glycolipid transfer protein 2 (223 aa).

Positions 69, 73, 116, and 155 each coordinate a ganglioside GM3 (d18:1(4E)).

Belongs to the GLTP family.

Its function is as follows. Transfers glycolipids in vitro. The protein is Glycolipid transfer protein 2 of Arabidopsis thaliana (Mouse-ear cress).